Consider the following 272-residue polypeptide: Small ribosomal subunit protein uS2 (272 aa).

Positions 224 to 233 are enriched in basic and acidic residues; it reads EGKKAREERQ. The interval 224-272 is disordered; it reads EGKKAREERQLAAAKDAAGDAKPEAEEAPAAAEAEEAPAAEAEEAPAAE. Acidic residues predominate over residues 256-272; sequence EAEEAPAAEAEEAPAAE.

The protein belongs to the universal ribosomal protein uS2 family.

This chain is Small ribosomal subunit protein uS2, found in Corynebacterium glutamicum (strain ATCC 13032 / DSM 20300 / JCM 1318 / BCRC 11384 / CCUG 27702 / LMG 3730 / NBRC 12168 / NCIMB 10025 / NRRL B-2784 / 534).